Reading from the N-terminus, the 89-residue chain is Small ribosomal subunit protein uS15 (89 aa).

This sequence belongs to the universal ribosomal protein uS15 family. In terms of assembly, part of the 30S ribosomal subunit. Forms a bridge to the 50S subunit in the 70S ribosome, contacting the 23S rRNA.

Its function is as follows. One of the primary rRNA binding proteins, it binds directly to 16S rRNA where it helps nucleate assembly of the platform of the 30S subunit by binding and bridging several RNA helices of the 16S rRNA. Functionally, forms an intersubunit bridge (bridge B4) with the 23S rRNA of the 50S subunit in the ribosome. This chain is Small ribosomal subunit protein uS15, found in Chlorobium phaeobacteroides (strain BS1).